A 260-amino-acid chain; its full sequence is Emerin (260 aa).

At methionine 1 the chain carries N-acetylmethionine. In terms of domain architecture, LEM spans methionine 1–arginine 45. Phosphoserine occurs at positions 8 and 29. The interval arginine 46–glutamine 224 is interaction with F-actin. Serine 49 carries the phosphoserine; by PKA modification. Residues serine 54, serine 69, serine 72, serine 88, serine 99, serine 142, serine 143, and serine 144 each carry the phosphoserine modification. Tyrosine 162 is modified (phosphotyrosine). The interval arginine 169–serine 188 is interaction with CTNNB1. 3 positions are modified to phosphoserine: serine 172, serine 175, and serine 177. The interval tyrosine 184–arginine 206 is disordered. Positions serine 187 to serine 201 are enriched in low complexity. Residues valine 225–tyrosine 245 traverse the membrane as a helical segment.

In terms of assembly, interacts with lamins A and C, BANF1, GMCL, BCLAF1 and YTHDC1/YT521. Interacts with TMEM43; the interaction retains emerin in the inner nuclear membrane. Interacts with ACTB, SPTAN1, F-actin, CTNNB1 and beta-tubulin. Interacts with SUN1 and SUN2. Interacts with TMEM201. Interacts with NEMP1.

The protein resides in the nucleus inner membrane. It is found in the nucleus outer membrane. In terms of biological role, stabilizes and promotes the formation of a nuclear actin cortical network. Stimulates actin polymerization in vitro by binding and stabilizing the pointed end of growing filaments. Inhibits beta-catenin activity by preventing its accumulation in the nucleus. Acts by influencing the nuclear accumulation of beta-catenin through a CRM1-dependent export pathway. Links centrosomes to the nuclear envelope via a microtubule association. Required for proper localization of non-farnesylated prelamin-A/C. Together with NEMP1, contributes to nuclear envelope stiffness in germ cells. This chain is Emerin (Emd), found in Rattus norvegicus (Rat).